Here is a 528-residue protein sequence, read N- to C-terminus: Cytochrome P450 1A5 (528 aa).

Cysteine 467 is a heme binding site.

Belongs to the cytochrome P450 family. Requires heme as cofactor.

Its subcellular location is the endoplasmic reticulum membrane. It localises to the microsome membrane. The enzyme catalyses an organic molecule + reduced [NADPH--hemoprotein reductase] + O2 = an alcohol + oxidized [NADPH--hemoprotein reductase] + H2O + H(+). Functionally, cytochromes P450 are a group of heme-thiolate monooxygenases. In liver microsomes, this enzyme is involved in an NADPH-dependent electron transport pathway. It oxidizes a variety of structurally unrelated compounds, including steroids, fatty acids, and xenobiotics. The sequence is that of Cytochrome P450 1A5 (CYP1A5) from Gallus gallus (Chicken).